We begin with the raw amino-acid sequence, 882 residues long: Cadherin-1 (882 aa).

Residues 1–22 (MGPWSRSLSALLLLLQVSSWLC) form the signal peptide. Residues 23 to 154 (QEPEPCHPGF…SSSGLRRRKR (132 aa)) constitute a propeptide that is removed on maturation. The N-linked (GlcNAc...) asparagine glycan is linked to asparagine 144. 5 Cadherin domains span residues 155–262 (DWVI…KPEF), 263–375 (TQEV…PPVF), 376–486 (NPTT…APIF), 487–593 (VPPE…DNAP), and 594–697 (IPEP…VCKK). Topologically, residues 155-709 (DWVIPPISCP…PIEAGLQIPA (555 aa)) are extracellular. Residue aspartate 257 participates in Ca(2+) binding. Serine 280 carries an O-linked (Man...) serine glycan. Residue threonine 285 is glycosylated (O-linked (Man...) threonine). Residue aspartate 288 coordinates Ca(2+). Threonine 358, threonine 470, threonine 472, and threonine 509 each carry an O-linked (Man...) threonine glycan. N-linked (GlcNAc...) asparagine glycosylation is present at asparagine 558. O-linked (Man...) threonine glycans are attached at residues threonine 576, threonine 578, and threonine 580. The N-linked (GlcNAc...) asparagine glycan is linked to asparagine 637. The helical transmembrane segment at 710–730 (ILGILGGILALLILILLLLLF) threads the bilayer. Over 731–882 (LRRRAVVKEP…ADMYGGGEDD (152 aa)) the chain is Cytoplasmic. A disordered region spans residues 747 to 767 (DTRDNVYYYDEEGGGEEDQDF). Residues tyrosine 753, tyrosine 754, and tyrosine 755 each carry the phosphotyrosine; by SRC modification. Residues 755 to 767 (YDEEGGGEEDQDF) are compositionally biased toward acidic residues. Positions 758–769 (EGGGEEDQDFDL) are required for binding CTNND1 and PSEN1. Phosphoserine is present on residues serine 770, serine 793, serine 838, serine 840, and serine 846. Positions 811-882 (IDENLKAADT…ADMYGGGEDD (72 aa)) are required for binding alpha, beta and gamma catenins.

In terms of assembly, homodimer; disulfide-linked. Component of an E-cadherin/ catenin adhesion complex composed of at least E-cadherin/CDH1, beta-catenin/CTNNB1 or gamma-catenin/JUP, and potentially alpha-catenin/CTNNA1; the complex is located to adherens junctions. Found in a complex composed of CDH1, RAP1A and PKP3; PKP3 acts as a scaffold protein within the complex, the complex is required for CDH1 localization to mature desmosome cell junctions. Interacts with the TRPV4 and CTNNB1 complex. Interacts with CTNND1. The stable association of CTNNA1 is controversial as CTNNA1 was shown not to bind to F-actin when assembled in the complex. Alternatively, the CTNNA1-containing complex may be linked to F-actin by other proteins such as LIMA1. Interaction with PSEN1, cleaves CDH1 resulting in the disassociation of cadherin-based adherens junctions (CAJs). Interacts with AJAP1 and DLGAP5. Interacts with TBC1D2. Interacts with LIMA1. Interacts with CAV1. Interacts with PIP5K1C. Interacts with RAB8B. Interacts with DDR1; this stabilizes CDH1 at the cell surface and inhibits its internalization. Interacts with RAPGEF2. Interacts with KLRG1. Forms a ternary complex composed of ADAM10, CADH1 and EPHA4; within the complex, CADH1 is cleaved by ADAM10 which disrupts adherens junctions. Interacts with SPEF1. Interacts with CTNNB1 and PKP2. Interacts with AMOTL2; the interaction may facilitate binding of radial actin fibers to cell junction complexes. Interacts with DSG3; the interaction is required for CDH1 localization to developing adherens junctions. In terms of processing, during apoptosis or with calcium influx, cleaved by a membrane-bound metalloproteinase (ADAM10), PS1/gamma-secretase and caspase-3. Processing by the metalloproteinase, induced by calcium influx, causes disruption of cell-cell adhesion and the subsequent release of beta-catenin into the cytoplasm. The residual membrane-tethered cleavage product is rapidly degraded via an intracellular proteolytic pathway. Cleavage by caspase-3 releases the cytoplasmic tail resulting in disintegration of the actin microfilament system. The gamma-secretase-mediated cleavage promotes disassembly of adherens junctions. During development of the cochlear organ of Corti, cleavage by ADAM10 at adherens junctions promotes pillar cell separation. Post-translationally, N-glycosylation at Asn-637 is essential for expression, folding and trafficking. Addition of bisecting N-acetylglucosamine by MGAT3 modulates its cell membrane location. Ubiquitinated by a SCF complex containing SKP2, which requires prior phosphorylation by CK1/CSNK1A1. Ubiquitinated by CBLL1/HAKAI, requires prior phosphorylation at Tyr-754. In terms of processing, O-glycosylated. O-manosylated by TMTC1, TMTC2, TMTC3 or TMTC4. Thr-285 and Thr-509 are O-mannosylated by TMTC2 or TMTC4 but not TMTC1 or TMTC3.

It is found in the cell junction. The protein localises to the adherens junction. Its subcellular location is the cell membrane. The protein resides in the endosome. It localises to the golgi apparatus. It is found in the trans-Golgi network. The protein localises to the cytoplasm. Its subcellular location is the desmosome. In terms of biological role, cadherins are calcium-dependent cell adhesion proteins. They preferentially interact with themselves in a homophilic manner in connecting cells; cadherins may thus contribute to the sorting of heterogeneous cell types. CDH1 is involved in mechanisms regulating cell-cell adhesions, mobility and proliferation of epithelial cells. Promotes organization of radial actin fiber structure and cellular response to contractile forces, via its interaction with AMOTL2 which facilitates anchoring of radial actin fibers to CDH1 junction complexes at the cell membrane. Plays a role in the early stages of desmosome cell-cell junction formation via facilitating the recruitment of DSG2 and DSP to desmosome plaques. Has a potent invasive suppressor role. It is a ligand for integrin alpha-E/beta-7. E-Cad/CTF2 promotes non-amyloidogenic degradation of Abeta precursors. Has a strong inhibitory effect on APP C99 and C83 production. The polypeptide is Cadherin-1 (CDH1) (Pongo abelii (Sumatran orangutan)).